The sequence spans 88 residues: Exodeoxyribonuclease 7 small subunit (88 aa).

A disordered region spans residues 69-88 (DPMHPDDGEPFDPSLVSTSQ).

The protein belongs to the XseB family. Heterooligomer composed of large and small subunits.

Its subcellular location is the cytoplasm. The catalysed reaction is Exonucleolytic cleavage in either 5'- to 3'- or 3'- to 5'-direction to yield nucleoside 5'-phosphates.. In terms of biological role, bidirectionally degrades single-stranded DNA into large acid-insoluble oligonucleotides, which are then degraded further into small acid-soluble oligonucleotides. The chain is Exodeoxyribonuclease 7 small subunit from Xylella fastidiosa (strain M23).